Reading from the N-terminus, the 257-residue chain is 5-oxoprolinase subunit A (257 aa).

The protein belongs to the LamB/PxpA family. In terms of assembly, forms a complex composed of PxpA, PxpB and PxpC.

The enzyme catalyses 5-oxo-L-proline + ATP + 2 H2O = L-glutamate + ADP + phosphate + H(+). Functionally, catalyzes the cleavage of 5-oxoproline to form L-glutamate coupled to the hydrolysis of ATP to ADP and inorganic phosphate. The polypeptide is 5-oxoprolinase subunit A (Bacillus subtilis (strain 168)).